Here is a 184-residue protein sequence, read N- to C-terminus: MASSMMSNAATAVAVAATSGGAQANMVAPFNGLKSIASFPVTRKSNDITSIASNGGRVQCMQVWPPVGKKKFETLSYLPPLSDAQLLAQVQYLLNKGWIPCIEFELEHPFVYRENHRSPGYQDGRYWTMWKLPMYGCTDPAQVLNEVEEAKKAYPTAFIRIIGFDNKRQVQCVSFIAYKPADSY.

The transit peptide at 1–59 (MASSMMSNAATAVAVAATSGGAQANMVAPFNGLKSIASFPVTRKSNDITSIASNGGRVQ) directs the protein to the chloroplast.

Belongs to the RuBisCO small chain family. Heterohexadecamer of 8 large and 8 small subunits.

It localises to the plastid. The protein localises to the chloroplast. RuBisCO catalyzes two reactions: the carboxylation of D-ribulose 1,5-bisphosphate, the primary event in carbon dioxide fixation, as well as the oxidative fragmentation of the pentose substrate. Both reactions occur simultaneously and in competition at the same active site. Although the small subunit is not catalytic it is essential for maximal activity. The polypeptide is Ribulose bisphosphate carboxylase small subunit, chloroplastic 2 (Amaranthus hypochondriacus (Prince-of-Wales feather)).